The following is an 882-amino-acid chain: Ion channel DMI1 (882 aa).

The interval 1 to 122 (MAKSNEESSN…PSSSSITKQQ (122 aa)) is disordered. A compositionally biased stretch (polar residues) spans 48–62 (TSTTKTDFSEQQWNY). Residues 78–95 (PPPPPSKPPVNLIPPHPR) show a composition bias toward pro residues. The segment covering 107 to 117 (SSLLPQPSSSS) has biased composition (low complexity). Transmembrane regions (helical) follow at residues 129–149 (SPIF…SAYL), 192–212 (TIAL…YKYL), 255–275 (LALL…LYAV), and 307–327 (IVSV…LGLV). RCK N-terminal domains are found at residues 348–489 (RNHV…ETVV) and 608–757 (PEKI…DKSI). Residues 378-403 (VIVVLAEKEKEEMEMDIAKLEFDFMG) are a coiled coil.

It belongs to the castor/pollux (TC 1.A.1.23) family. Interacts (via c-terminus) with CNGC15A, CNGC15B and CNGC15C (via N-terminus). The Nod factor has no effect on these interactions, implying that the complex is maintained after activation. In terms of tissue distribution, mainly expressed in roots and nodules. Also detected in pods, flowers, leaves, and stems.

Its subcellular location is the nucleus membrane. Required for early signal transduction events leading to endosymbiosis. Acts early in a signal transduction chain leading from the perception of Nod factor to the activation of calcium spiking. Also involved in mycorrhizal symbiosis. May be involved in the regulation of the calcium channel responsible for calcium spiking by mobilizing another cation, and thereby altering the membrane potential. This Medicago truncatula (Barrel medic) protein is Ion channel DMI1.